We begin with the raw amino-acid sequence, 536 residues long: REST corepressor 2 (536 aa).

The disordered stretch occupies residues Met-1–Gly-44. The segment covering His-24–Asn-36 has biased composition (basic and acidic residues). The ELM2 domain maps to Ser-38–Thr-123. The SANT 1 domain maps to Pro-124–Thr-175. Positions Val-179–Met-264 are disordered. The span at Asn-197–Phe-211 shows a compositional bias: acidic residues. A compositionally biased stretch (basic residues) spans Tyr-249–Lys-262. A coiled-coil region spans residues Val-283–Asp-315. In terms of domain architecture, SANT 2 spans Lys-328 to Asn-379. The interval Ala-389–His-536 is disordered. Over residues Gln-391–Asn-406 the composition is skewed to polar residues. Positions Ser-422–Pro-449 are enriched in low complexity. Residues Leu-450 to Gln-476 show a composition bias toward pro residues.

Belongs to the CoREST family.

It is found in the nucleus. Its function is as follows. May act as a component of a corepressor complex that represses transcription. The sequence is that of REST corepressor 2 (rcor2) from Danio rerio (Zebrafish).